Consider the following 318-residue polypeptide: Acetyl-coenzyme A carboxylase carboxyl transferase subunit alpha (318 aa).

In terms of domain architecture, CoA carboxyltransferase C-terminal spans 32 to 293; it reads NINEEIQRLE…REALREEWAR (262 aa).

It belongs to the AccA family. As to quaternary structure, acetyl-CoA carboxylase is a heterohexamer composed of biotin carboxyl carrier protein (AccB), biotin carboxylase (AccC) and two subunits each of ACCase subunit alpha (AccA) and ACCase subunit beta (AccD).

Its subcellular location is the cytoplasm. The enzyme catalyses N(6)-carboxybiotinyl-L-lysyl-[protein] + acetyl-CoA = N(6)-biotinyl-L-lysyl-[protein] + malonyl-CoA. It participates in lipid metabolism; malonyl-CoA biosynthesis; malonyl-CoA from acetyl-CoA: step 1/1. Component of the acetyl coenzyme A carboxylase (ACC) complex. First, biotin carboxylase catalyzes the carboxylation of biotin on its carrier protein (BCCP) and then the CO(2) group is transferred by the carboxyltransferase to acetyl-CoA to form malonyl-CoA. The chain is Acetyl-coenzyme A carboxylase carboxyl transferase subunit alpha from Halorhodospira halophila (strain DSM 244 / SL1) (Ectothiorhodospira halophila (strain DSM 244 / SL1)).